The primary structure comprises 66 residues: UPF0337 protein SpyM3_1723 (66 aa).

A compositionally biased stretch (basic and acidic residues) spans 1 to 10; sequence MSEEKLKSKI. The disordered stretch occupies residues 1–23; sequence MSEEKLKSKIEQASGGLKEGAGK.

It belongs to the UPF0337 (CsbD) family.

This Streptococcus pyogenes serotype M3 (strain ATCC BAA-595 / MGAS315) protein is UPF0337 protein SpyM3_1723.